The chain runs to 251 residues: Pyrroloquinoline-quinone synthase (251 aa).

Belongs to the PqqC family.

It carries out the reaction 6-(2-amino-2-carboxyethyl)-7,8-dioxo-1,2,3,4,7,8-hexahydroquinoline-2,4-dicarboxylate + 3 O2 = pyrroloquinoline quinone + 2 H2O2 + 2 H2O + H(+). It functions in the pathway cofactor biosynthesis; pyrroloquinoline quinone biosynthesis. Ring cyclization and eight-electron oxidation of 3a-(2-amino-2-carboxyethyl)-4,5-dioxo-4,5,6,7,8,9-hexahydroquinoline-7,9-dicarboxylic-acid to PQQ. The protein is Pyrroloquinoline-quinone synthase of Klebsiella pneumoniae (strain 342).